The sequence spans 442 residues: Serine--tRNA ligase (442 aa).

249–251 serves as a coordination point for L-serine; it reads TSE. 280–282 is a binding site for ATP; that stretch reads RSE. An L-serine-binding site is contributed by Glu-303. 367 to 370 contributes to the ATP binding site; sequence EISS. Ser-402 serves as a coordination point for L-serine.

The protein belongs to the class-II aminoacyl-tRNA synthetase family. Type-1 seryl-tRNA synthetase subfamily. In terms of assembly, homodimer. The tRNA molecule binds across the dimer.

It is found in the cytoplasm. The enzyme catalyses tRNA(Ser) + L-serine + ATP = L-seryl-tRNA(Ser) + AMP + diphosphate + H(+). It carries out the reaction tRNA(Sec) + L-serine + ATP = L-seryl-tRNA(Sec) + AMP + diphosphate + H(+). Its pathway is aminoacyl-tRNA biosynthesis; selenocysteinyl-tRNA(Sec) biosynthesis; L-seryl-tRNA(Sec) from L-serine and tRNA(Sec): step 1/1. Catalyzes the attachment of serine to tRNA(Ser). Is also able to aminoacylate tRNA(Sec) with serine, to form the misacylated tRNA L-seryl-tRNA(Sec), which will be further converted into selenocysteinyl-tRNA(Sec). In Acidovorax ebreus (strain TPSY) (Diaphorobacter sp. (strain TPSY)), this protein is Serine--tRNA ligase.